A 74-amino-acid chain; its full sequence is Protein SlyX homolog (74 aa).

This sequence belongs to the SlyX family.

The sequence is that of Protein SlyX homolog from Neisseria meningitidis serogroup C / serotype 2a (strain ATCC 700532 / DSM 15464 / FAM18).